The sequence spans 764 residues: MVTTHNLGFPRIGAQRELKFGLERYWKGESSRDELKALGAELRERHWNDQRDLDLAPIGDFSFYDQVLDMSFTLGNLPKRVQGFHGDVLDNYFRVARGRSAQAADEHATCCGGVSAGEMTKWFDTNYHYIVPEFHADTNFSLDPSCLLQQLAEARALGVAGKPVILGPVTYLWLGKAKDDSDRLALLPKLLPVYGALLDTLTAQGVEWVQIDEPILVTELDAEWRQALRTAYAALETRRIKVLLATYFGALGDNLTLAASLPVDGLHVDAINARDEVDALVRELPADRVLSVGAINGRNIWKTDLNATLDWLEPLAKQLGERLWIAPSCSLLHVPVDLASEQKLDPEIRSWLAFALQKLDELNVLATALNEGRDKVADALAANAAAIDSRRRSPRVNNPAVKAALARIDAQLGNRASPYTQRAPKQSARLNLPAFPTTTIGSFPQTADIRQARRQFKSGALDEAGYRAAMQAEIERSVREQESLELDVLVHGEAERNDMVEYFGEQLDGYAFSQFGWVQSYGSRCVKPPILFGDISRPKAMTVEWITYAQSLTNKPMKGMLTGPVTILNWSFVRDDQPRSVSCYQLALAIRDEVLDLEKAGVRVIQIDEAALREGLPLRRAQWGEYLKWAVEAFRITANGVQDDTQIHTHMCYSEFNDIIASIADMDADVITIETSRSDMELLDAFDSFRYPNEIGPGVYDIHSPNIPTQDHIVGLMKKAAERIPAERLWVNPDCGLKTRQWAEVIPALTNMVAAAKTLRNQVQ.

5-methyltetrahydropteroyltri-L-glutamate-binding positions include 16 to 19 and Lys-121; that span reads RELK. L-homocysteine is bound by residues 440–442 and Glu-493; that span reads IGS. Residues 440–442 and Glu-493 contribute to the L-methionine site; that span reads IGS. 5-methyltetrahydropteroyltri-L-glutamate contacts are provided by residues 524 to 525 and Trp-570; that span reads RC. Asp-608 is a binding site for L-homocysteine. L-methionine is bound at residue Asp-608. A 5-methyltetrahydropteroyltri-L-glutamate-binding site is contributed by Glu-614. Zn(2+) is bound by residues His-650, Cys-652, and Glu-674. Residue His-703 is the Proton donor of the active site. A Zn(2+)-binding site is contributed by Cys-735.

This sequence belongs to the vitamin-B12 independent methionine synthase family. Requires Zn(2+) as cofactor.

The catalysed reaction is 5-methyltetrahydropteroyltri-L-glutamate + L-homocysteine = tetrahydropteroyltri-L-glutamate + L-methionine. Its pathway is amino-acid biosynthesis; L-methionine biosynthesis via de novo pathway; L-methionine from L-homocysteine (MetE route): step 1/1. Functionally, catalyzes the transfer of a methyl group from 5-methyltetrahydrofolate to homocysteine resulting in methionine formation. The polypeptide is 5-methyltetrahydropteroyltriglutamate--homocysteine methyltransferase (Burkholderia ambifaria (strain MC40-6)).